Here is an 843-residue protein sequence, read N- to C-terminus: MRATEIRKNYQHLWKGGTLLLGMLMICSAAEQLWVTVYYGVPVWKEATTTLFCASDAKAYDTEVHNVWATHACVPTDPNPQEVKLENVTENFNMWKNNMVEQMHEDIISLWDQSLKPCVKLTPLCVTLNCTDLRNATNTTSSSWETMEKGEIKNCSFNITTSIRDKVQKEYALFYNLDVVPIDNASYRLISCNTSVITQACPKVSFEPIPIHYCAPAGFAILKCNDKKFNGTGPCTNVSTVQCTHGIRPVVSTQLLLNGSLAEEEIVIRSENFTNNAKTIIVQLNESVVINCTRPNNNTRKSINIGPGRALYTTGEIIGDIRQAHCNLSKTQWENTLEQIAIKLKEQFGNNKTIIFNPSSGGDPEIVTHSFNCGGEFFYCNSTQLFTWNDTRKLNNTGRNITLPCRIKQIINMWQEVGKAMYAPPIRGQIRCSSNITGLLLTRDGGKDTNGTEIFRPGGGDMRDNWRSELYKYKVVKIEPLGVAPTKAKRRVVQREKRAVGLGALFLGFLGAAGSTMGAASITLTVQARQLLSGIVQQQNNLLRAIEAQQHLLQLTVWGIKQLQARVLAVERYLRDQQLLGIWGCSGKLICTTTVPWNTSWSNKSLNEIWDNMTWMKWEREIDNYTHIIYSLIEQSQNQQEKNEQELLALDKWASLWNWFDITKWLWYIKIFIMIVGGLIGLRIVFVVLSIVNRVRQGYSPLSFQTHLPAQRGPDRPDGIEEEGGERDRDRSGPLVDGFLAIIWVDLRSLCLFSYHRLRDLLLIVTRIVELLGRRGWGVLKYWWNLLQYWIQELKNSAVSLLNATAIAVAEGTDRVIEILQRAFRAVLHIPVRIRQGLERALL.

The signal sequence occupies residues 1 to 31 (MRATEIRKNYQHLWKGGTLLLGMLMICSAAE). Residues 32 to 671 (QLWVTVYYGV…ITKWLWYIKI (640 aa)) lie on the Extracellular side of the membrane. Cysteine 53 and cysteine 73 are oxidised to a cystine. N-linked (GlcNAc...) asparagine; by host glycans are attached at residues asparagine 87, asparagine 129, asparagine 135, asparagine 138, asparagine 154, asparagine 158, asparagine 184, asparagine 193, asparagine 230, asparagine 237, asparagine 258, asparagine 272, asparagine 285, asparagine 291, asparagine 297, asparagine 327, and asparagine 351. Cystine bridges form between cysteine 118–cysteine 201, cysteine 125–cysteine 192, cysteine 130–cysteine 155, cysteine 214–cysteine 243, and cysteine 224–cysteine 235. A V1 region spans residues 130-154 (CTDLRNATNTTSSSWETMEKGEIKN). The tract at residues 155-192 (CSFNITTSIRDKVQKEYALFYNLDVVPIDNASYRLISC) is V2. Positions 292-325 (CTRPNNNTRKSINIGPGRALYTTGEIIGDIRQAH) are V3. Cysteine 292 and cysteine 326 are disulfide-bonded. The CD4-binding loop stretch occupies residues 359-369 (SSGGDPEIVTH). 2 disulfides stabilise this stretch: cysteine 373-cysteine 432 and cysteine 380-cysteine 405. The segment at 380 to 405 (CNSTQLFTWNDTRKLNNTGRNITLPC) is V4. Asparagine 381, asparagine 389, asparagine 395, asparagine 400, asparagine 435, and asparagine 450 each carry an N-linked (GlcNAc...) asparagine; by host glycan. V5 regions lie at residues 448 to 458 (DTNGTEIFRPG) and 450 to 458 (NGTEIFRPG). A fusion peptide region spans residues 499 to 519 (AVGLGALFLGFLGAAGSTMGA). An immunosuppression region spans residues 561-579 (KQLQARVLAVERYLRDQQL). Cysteine 585 and cysteine 591 are disulfide-bonded. N-linked (GlcNAc...) asparagine; by host glycosylation is found at asparagine 598, asparagine 603, asparagine 612, and asparagine 624. The stretch at 620–654 (REIDNYTHIIYSLIEQSQNQQEKNEQELLALDKWA) forms a coiled coil. Residues 649–670 (ALDKWASLWNWFDITKWLWYIK) form an MPER; binding to GalCer region. A helical membrane pass occupies residues 672 to 692 (FIMIVGGLIGLRIVFVVLSIV). Residues 693 to 843 (NRVRQGYSPL…IRQGLERALL (151 aa)) are Cytoplasmic-facing. The short motif at 699–702 (YSPL) is the YXXL motif; contains endocytosis signal element. Positions 706 to 731 (THLPAQRGPDRPDGIEEEGGERDRDR) are disordered. Cysteine 751 is lipidated: S-palmitoyl cysteine; by host. The Di-leucine internalization motif motif lies at 842-843 (LL).

This sequence belongs to the HIV-1 env protein family. The mature envelope protein (Env) consists of a homotrimer of non-covalently associated gp120-gp41 heterodimers. The resulting complex protrudes from the virus surface as a spike. There seems to be as few as 10 spikes on the average virion. Interacts with host CD4, CCR5 and CXCR4. Gp120 also interacts with the C-type lectins CD209/DC-SIGN and CLEC4M/DC-SIGNR (collectively referred to as DC-SIGN(R)). Gp120 and gp41 interact with GalCer. Gp120 interacts with host ITGA4/ITGB7 complex; on CD4+ T-cells, this interaction results in rapid activation of integrin ITGAL/LFA-1, which facilitates efficient cell-to-cell spreading of HIV-1. Gp120 interacts with cell-associated heparan sulfate; this interaction increases virus infectivity on permissive cells and may be involved in infection of CD4- cells. In terms of assembly, the mature envelope protein (Env) consists of a homotrimer of non-covalently associated gp120-gp41 heterodimers. The resulting complex protrudes from the virus surface as a spike. There seems to be as few as 10 spikes on the average virion. Post-translationally, highly glycosylated by host. The high number of glycan on the protein is reffered to as 'glycan shield' because it contributes to hide protein sequence from adaptive immune system. In terms of processing, palmitoylation of the transmembrane protein and of Env polyprotein (prior to its proteolytic cleavage) is essential for their association with host cell membrane lipid rafts. Palmitoylation is therefore required for envelope trafficking to classical lipid rafts, but not for viral replication. Specific enzymatic cleavages in vivo yield mature proteins. Envelope glycoproteins are synthesized as an inactive precursor that is heavily N-glycosylated and processed likely by host cell furin in the Golgi to yield the mature SU and TM proteins. The cleavage site between SU and TM requires the minimal sequence [KR]-X-[KR]-R. About 2 of the 9 disulfide bonds of gp41 are reduced by P4HB/PDI, following binding to CD4 receptor.

It localises to the virion membrane. Its subcellular location is the host cell membrane. It is found in the host endosome membrane. Functionally, oligomerizes in the host endoplasmic reticulum into predominantly trimers. In a second time, gp160 transits in the host Golgi, where glycosylation is completed. The precursor is then proteolytically cleaved in the trans-Golgi and thereby activated by cellular furin or furin-like proteases to produce gp120 and gp41. In terms of biological role, attaches the virus to the host lymphoid cell by binding to the primary receptor CD4. This interaction induces a structural rearrangement creating a high affinity binding site for a chemokine coreceptor like CXCR4 and/or CCR5. Acts as a ligand for CD209/DC-SIGN and CLEC4M/DC-SIGNR, which are respectively found on dendritic cells (DCs), and on endothelial cells of liver sinusoids and lymph node sinuses. These interactions allow capture of viral particles at mucosal surfaces by these cells and subsequent transmission to permissive cells. HIV subverts the migration properties of dendritic cells to gain access to CD4+ T-cells in lymph nodes. Virus transmission to permissive T-cells occurs either in trans (without DCs infection, through viral capture and transmission), or in cis (following DCs productive infection, through the usual CD4-gp120 interaction), thereby inducing a robust infection. In trans infection, bound virions remain infectious over days and it is proposed that they are not degraded, but protected in non-lysosomal acidic organelles within the DCs close to the cell membrane thus contributing to the viral infectious potential during DCs' migration from the periphery to the lymphoid tissues. On arrival at lymphoid tissues, intact virions recycle back to DCs' cell surface allowing virus transmission to CD4+ T-cells. Its function is as follows. Acts as a class I viral fusion protein. Under the current model, the protein has at least 3 conformational states: pre-fusion native state, pre-hairpin intermediate state, and post-fusion hairpin state. During fusion of viral and target intracellular membranes, the coiled coil regions (heptad repeats) assume a trimer-of-hairpins structure, positioning the fusion peptide in close proximity to the C-terminal region of the ectodomain. The formation of this structure appears to drive apposition and subsequent fusion of viral and target cell membranes. Complete fusion occurs in host cell endosomes and is dynamin-dependent, however some lipid transfer might occur at the plasma membrane. The virus undergoes clathrin-dependent internalization long before endosomal fusion, thus minimizing the surface exposure of conserved viral epitopes during fusion and reducing the efficacy of inhibitors targeting these epitopes. Membranes fusion leads to delivery of the nucleocapsid into the cytoplasm. The chain is Envelope glycoprotein gp160 from Homo sapiens (Human).